Consider the following 449-residue polypeptide: UDP-glycosyltransferase 76E6 (449 aa).

UDP-alpha-D-glucose-binding positions include serine 274, 333-335 (APQ), 350-358 (HCGWNSTLE), and 372-375 (HGEQ).

Belongs to the UDP-glycosyltransferase family.

In Arabidopsis thaliana (Mouse-ear cress), this protein is UDP-glycosyltransferase 76E6 (UGT76E6).